The following is a 309-amino-acid chain: Mitochondrial import receptor subunit TOM34 (309 aa).

Residue Ser-8 is modified to Phosphoserine. TPR repeat units lie at residues 9–42 (VEQL…LQAR), 51–84 (SVLY…VPFS), and 85–118 (IKPL…DNSV). The tract at residues 158-189 (WNSLPSDNHKETAKTKSKEATATKSRVPSAGD) is disordered. A Phosphoserine modification is found at Ser-160. Residues 164–178 (DNHKETAKTKSKEAT) show a composition bias toward basic and acidic residues. Phosphoserine is present on Ser-186. TPR repeat units lie at residues 193–226 (AKAL…SSLE), 227–260 (SATY…DGKN), and 261–294 (VKAF…EPRN). Residue Lys-197 forms a Glycyl lysine isopeptide (Lys-Gly) (interchain with G-Cter in SUMO2) linkage.

It belongs to the Tom34 family. In terms of assembly, interacts with HSP90A, VCP, ATP6V1D, KIAA0665, AMPK, and DMAP1 through its TPR repeat. As to expression, isoform 1 is ubiquitously expressed while isoform 2 is expressed only in mature testicular germ cells. Isoform 1 is expressed in all testicular cells. Isoform 2 is highly expressed in early to late pachytene cells but expression is significantly decreased in round spermatid cells.

It localises to the cytoplasm. Its subcellular location is the mitochondrion outer membrane. In terms of biological role, plays a role in the import of cytosolically synthesized preproteins into mitochondria. Binds the mature portion of precursor proteins. Interacts with cellular components, and possesses weak ATPase activity. May be a chaperone-like protein that helps to keep newly synthesized precursors in an unfolded import compatible state. This Mus musculus (Mouse) protein is Mitochondrial import receptor subunit TOM34 (Tomm34).